Reading from the N-terminus, the 373-residue chain is Peroxisomal biogenesis factor 3 (373 aa).

At 1–15 the chain is on the cytoplasmic side; the sequence is MFRSTWNFLKRHKKK. The segment at 1-45 is targeting to peroxisomes; that stretch reads MFRSTWNFLKRHKKKCIFLGTVLGGVYILGKYGQKKIREIQEREA. Residues 16–36 traverse the membrane as a helical segment; it reads CIFLGTVLGGVYILGKYGQKK. Residues 37–116 lie on the Peroxisomal side of the membrane; sequence IREIQEREAA…LKIISFTRSI (80 aa). The helical transmembrane segment at 117 to 140 threads the bilayer; it reads VAVYSTCMLVVLLRVQLNIIGGYI. Positions 120–136 are interaction with PEX19; sequence YSTCMLVVLLRVQLNII. Residues 141 to 373 lie on the Cytoplasmic side of the membrane; sequence YLDNAAVGKN…AFSTPQQLEK (233 aa).

The protein belongs to the peroxin-3 family. As to quaternary structure, interacts with PEX19.

Its subcellular location is the peroxisome membrane. Its function is as follows. Involved in peroxisome biosynthesis and integrity. Assembles membrane vesicles before the matrix proteins are translocated. As a docking factor for PEX19, is necessary for the import of peroxisomal membrane proteins in the peroxisomes. The chain is Peroxisomal biogenesis factor 3 (PEX3) from Bos taurus (Bovine).